The sequence spans 616 residues: Dihydroxy-acid dehydratase (616 aa).

Residue Asp81 participates in Mg(2+) binding. Cys122 contacts [2Fe-2S] cluster. Positions 123 and 124 each coordinate Mg(2+). Position 124 is an N6-carboxylysine (Lys124). Cys195 is a [2Fe-2S] cluster binding site. Glu491 provides a ligand contact to Mg(2+). Catalysis depends on Ser517, which acts as the Proton acceptor.

This sequence belongs to the IlvD/Edd family. As to quaternary structure, homodimer. Requires [2Fe-2S] cluster as cofactor. Mg(2+) is required as a cofactor.

The catalysed reaction is (2R)-2,3-dihydroxy-3-methylbutanoate = 3-methyl-2-oxobutanoate + H2O. The enzyme catalyses (2R,3R)-2,3-dihydroxy-3-methylpentanoate = (S)-3-methyl-2-oxopentanoate + H2O. It functions in the pathway amino-acid biosynthesis; L-isoleucine biosynthesis; L-isoleucine from 2-oxobutanoate: step 3/4. Its pathway is amino-acid biosynthesis; L-valine biosynthesis; L-valine from pyruvate: step 3/4. Functionally, functions in the biosynthesis of branched-chain amino acids. Catalyzes the dehydration of (2R,3R)-2,3-dihydroxy-3-methylpentanoate (2,3-dihydroxy-3-methylvalerate) into 2-oxo-3-methylpentanoate (2-oxo-3-methylvalerate) and of (2R)-2,3-dihydroxy-3-methylbutanoate (2,3-dihydroxyisovalerate) into 2-oxo-3-methylbutanoate (2-oxoisovalerate), the penultimate precursor to L-isoleucine and L-valine, respectively. This chain is Dihydroxy-acid dehydratase, found in Photorhabdus laumondii subsp. laumondii (strain DSM 15139 / CIP 105565 / TT01) (Photorhabdus luminescens subsp. laumondii).